A 202-amino-acid chain; its full sequence is Alcohol dehydrogenase-related 31 kDa protein (202 aa).

11–34 (YVADCGGIALETSKVLMTKNIAKL) provides a ligand contact to NAD(+). Ser-139 serves as a coordination point for substrate. The active-site Proton acceptor is Tyr-152.

It belongs to the short-chain dehydrogenases/reductases (SDR) family.

This Drosophila erecta (Fruit fly) protein is Alcohol dehydrogenase-related 31 kDa protein (Adhr).